Consider the following 146-residue polypeptide: Mu-like prophage FluMu G protein 1 (146 aa).

To phage Mu protein G.

This Haemophilus influenzae (strain ATCC 51907 / DSM 11121 / KW20 / Rd) protein is Mu-like prophage FluMu G protein 1.